The primary structure comprises 282 residues: Bis(5'-nucleosyl)-tetraphosphatase, symmetrical (282 aa).

The protein belongs to the Ap4A hydrolase family.

It carries out the reaction P(1),P(4)-bis(5'-adenosyl) tetraphosphate + H2O = 2 ADP + 2 H(+). In terms of biological role, hydrolyzes diadenosine 5',5'''-P1,P4-tetraphosphate to yield ADP. The chain is Bis(5'-nucleosyl)-tetraphosphatase, symmetrical from Citrobacter koseri (strain ATCC BAA-895 / CDC 4225-83 / SGSC4696).